Here is a 142-residue protein sequence, read N- to C-terminus: Peptide methionine sulfoxide reductase MsrB (142 aa).

The MsrB domain maps to 13 to 135 (EKDWKVELSE…NSLSMTFKGE (123 aa)). Residues cysteine 52, cysteine 55, cysteine 101, and cysteine 104 each contribute to the Zn(2+) site. The Nucleophile role is filled by cysteine 124.

Belongs to the MsrB Met sulfoxide reductase family. Requires Zn(2+) as cofactor.

The enzyme catalyses L-methionyl-[protein] + [thioredoxin]-disulfide + H2O = L-methionyl-(R)-S-oxide-[protein] + [thioredoxin]-dithiol. This is Peptide methionine sulfoxide reductase MsrB from Alteromonas mediterranea (strain DSM 17117 / CIP 110805 / LMG 28347 / Deep ecotype).